Reading from the N-terminus, the 417-residue chain is Serpin A9 (417 aa).

Residues 1 to 23 form the signal peptide; the sequence is MASYLYGVLFAVGLCAPIYCVSP. Residues Asn-101 and Asn-390 are each glycosylated (N-linked (GlcNAc...) asparagine).

The protein belongs to the serpin family. As to expression, highly expressed in normal germinal center (GC) B-cells and GC B-cell-derived malignancies.

The protein localises to the secreted. It is found in the cytoplasm. Its subcellular location is the membrane. Its function is as follows. Protease inhibitor that inhibits trypsin and trypsin-like serine proteases (in vitro). Inhibits plasmin and thrombin with lower efficiency (in vitro). The protein is Serpin A9 (SERPINA9) of Homo sapiens (Human).